The chain runs to 43 residues: uncharacterized protein (43 aa).

Residues 1–37 (MIIKNNNNNNNNNNNNNNNNNNNNNNNNNNNNNNNNN) are compositionally biased toward low complexity. The tract at residues 1–43 (MIIKNNNNNNNNNNNNNNNNNNNNNNNNNNNNNNNNNIEIIIK) is disordered.

This is an uncharacterized protein from Dictyostelium discoideum (Social amoeba).